The sequence spans 989 residues: Cellulose synthase A catalytic subunit 4 [UDP-forming] (989 aa).

Residues Met1 to Lys184 lie on the Cytoplasmic side of the membrane. Zn(2+) contacts are provided by Cys9, Cys12, Cys20, Cys23, Cys28, Cys31, Cys43, and Cys46. The RING-type; degenerate zinc finger occupies Cys9–Gly47. Over residues Lys138–Ala149 the composition is skewed to basic residues. Residues Lys138–Glu158 are disordered. Residues Leu185–Tyr205 traverse the membrane as a helical segment. Over Arg206 to Ser213 the chain is Extracellular. The helical transmembrane segment at Ala214–Leu234 threads the bilayer. Over Asp235–Ser772 the chain is Cytoplasmic. Residues Ser272, Lys278, Glu279, and Asp308 each coordinate UDP-alpha-D-glucose. Residue Asp308 is part of the active site. Positions Val362–Thr389 form a coiled coil. Lys449 provides a ligand contact to UDP-alpha-D-glucose. Mn(2+)-binding residues include Lys450 and Asp474. Residue Asp688 is part of the active site. The chain crosses the membrane as a helical span at residues Leu773–Ile793. The Extracellular portion of the chain corresponds to Pro794–Asn798. The chain crosses the membrane as a helical span at residues Ala799–Leu819. The Cytoplasmic portion of the chain corresponds to Arg820–Phe835. A helical membrane pass occupies residues Trp836 to Ile856. At Ala857–Thr884 the chain is on the extracellular side. Asn862 is a glycosylation site (N-linked (GlcNAc...) asparagine). A helical membrane pass occupies residues Thr885–Phe905. The Cytoplasmic portion of the chain corresponds to Ser906–Trp916. A helical membrane pass occupies residues Gly917 to Leu937. At Lys938–Arg946 the chain is on the extracellular side. Residues Thr947–Val967 traverse the membrane as a helical segment. Topologically, residues Lys968–Cys989 are cytoplasmic.

This sequence belongs to the glycosyltransferase 2 family. Plant cellulose synthase subfamily. Mn(2+) is required as a cofactor. It depends on Zn(2+) as a cofactor.

It is found in the cell membrane. The enzyme catalyses [(1-&gt;4)-beta-D-glucosyl](n) + UDP-alpha-D-glucose = [(1-&gt;4)-beta-D-glucosyl](n+1) + UDP + H(+). It functions in the pathway glycan metabolism; plant cellulose biosynthesis. Its function is as follows. Catalytic subunit of cellulose synthase terminal complexes ('rosettes'), required for beta-1,4-glucan microfibril crystallization, a major mechanism of the cell wall formation. Involved in the secondary cell wall formation. This chain is Cellulose synthase A catalytic subunit 4 [UDP-forming] (CESA4), found in Oryza sativa subsp. japonica (Rice).